We begin with the raw amino-acid sequence, 356 residues long: uncharacterized protein (356 aa).

It is found in the cytoplasm. Its subcellular location is the nucleus. This is an uncharacterized protein from Saccharomyces cerevisiae (strain ATCC 204508 / S288c) (Baker's yeast).